The primary structure comprises 129 residues: 3-aminoacrylate deaminase RutC (129 aa).

It belongs to the RutC family.

The catalysed reaction is (Z)-3-aminoacrylate + H2O + H(+) = 3-oxopropanoate + NH4(+). Functionally, involved in pyrimidine catabolism. Catalyzes the deamination of 3-aminoacrylate to malonic semialdehyde, a reaction that can also occur spontaneously. RutC may facilitate the reaction and modulate the metabolic fitness, rather than catalyzing essential functions. The chain is 3-aminoacrylate deaminase RutC from Caulobacter segnis (strain ATCC 21756 / DSM 7131 / JCM 7823 / NBRC 15250 / LMG 17158 / TK0059) (Mycoplana segnis).